We begin with the raw amino-acid sequence, 265 residues long: RNA polymerase sigma factor SigI2 (265 aa).

Positions 71–84 match the Polymerase core binding motif; the sequence is DEFSVGLAAFNEAI. The H-T-H motif DNA-binding region spans 211–230; sequence KTELLKLLKINKKTIERNRT.

This sequence belongs to the sigma-70 factor family. SigI subfamily. As to quaternary structure, interacts with RsgI2.

It is found in the cytoplasm. Negatively regulated by the anti-sigma-I factor RsgI2. Binding of the polysaccharide substrate to RsgI2 may lead to the release and activation of SigI2. Functionally, sigma factors are initiation factors that promote the attachment of RNA polymerase to specific initiation sites and are then released. This sigma factor is involved in regulation of cellulosomal genes via an external polysaccharide-sensing mechanism. The protein is RNA polymerase sigma factor SigI2 of Acetivibrio thermocellus (strain ATCC 27405 / DSM 1237 / JCM 9322 / NBRC 103400 / NCIMB 10682 / NRRL B-4536 / VPI 7372) (Clostridium thermocellum).